The following is a 153-amino-acid chain: Coiled-coil domain-containing protein 182 (153 aa).

Residues 46–109 (ADLEILQQKV…RLREEEDRGI (64 aa)) are a coiled coil.

The protein is Coiled-coil domain-containing protein 182 (CCDC182) of Homo sapiens (Human).